The primary structure comprises 161 residues: SsrA-binding protein (161 aa).

It belongs to the SmpB family.

The protein resides in the cytoplasm. Functionally, required for rescue of stalled ribosomes mediated by trans-translation. Binds to transfer-messenger RNA (tmRNA), required for stable association of tmRNA with ribosomes. tmRNA and SmpB together mimic tRNA shape, replacing the anticodon stem-loop with SmpB. tmRNA is encoded by the ssrA gene; the 2 termini fold to resemble tRNA(Ala) and it encodes a 'tag peptide', a short internal open reading frame. During trans-translation Ala-aminoacylated tmRNA acts like a tRNA, entering the A-site of stalled ribosomes, displacing the stalled mRNA. The ribosome then switches to translate the ORF on the tmRNA; the nascent peptide is terminated with the 'tag peptide' encoded by the tmRNA and targeted for degradation. The ribosome is freed to recommence translation, which seems to be the essential function of trans-translation. The chain is SsrA-binding protein from Baumannia cicadellinicola subsp. Homalodisca coagulata.